The primary structure comprises 171 residues: 3-hydroxydecanoyl-[acyl-carrier-protein] dehydratase (171 aa).

His-70 is an active-site residue.

It belongs to the thioester dehydratase family. FabA subfamily. Homodimer.

The protein localises to the cytoplasm. The enzyme catalyses a (3R)-hydroxyacyl-[ACP] = a (2E)-enoyl-[ACP] + H2O. It catalyses the reaction (3R)-hydroxydecanoyl-[ACP] = (2E)-decenoyl-[ACP] + H2O. The catalysed reaction is (2E)-decenoyl-[ACP] = (3Z)-decenoyl-[ACP]. The protein operates within lipid metabolism; fatty acid biosynthesis. In terms of biological role, necessary for the introduction of cis unsaturation into fatty acids. Catalyzes the dehydration of (3R)-3-hydroxydecanoyl-ACP to E-(2)-decenoyl-ACP and then its isomerization to Z-(3)-decenoyl-ACP. Can catalyze the dehydratase reaction for beta-hydroxyacyl-ACPs with saturated chain lengths up to 16:0, being most active on intermediate chain length. The chain is 3-hydroxydecanoyl-[acyl-carrier-protein] dehydratase from Methylobacillus flagellatus (strain ATCC 51484 / DSM 6875 / VKM B-1610 / KT).